The following is a 574-amino-acid chain: Septation ring formation regulator EzrA (574 aa).

At 1–7 (MSIGLVI) the chain is on the extracellular side. The chain crosses the membrane as a helical span at residues 8–26 (LVAVVALLLVVGYGTAVLM). Coiled-coil stretches lie at residues 26-47 (MRKR…LYNL), 105-189 (KAKH…QFVT), 258-346 (ESRF…FLIS), 375-415 (SETK…IEKD), and 455-494 (STSN…LEEE). Topologically, residues 27 to 574 (RKRNEALLQN…YEKTRENIRF (548 aa)) are cytoplasmic.

Belongs to the EzrA family.

It is found in the cell membrane. In terms of biological role, negative regulator of FtsZ ring formation; modulates the frequency and position of FtsZ ring formation. Inhibits FtsZ ring formation at polar sites. Interacts either with FtsZ or with one of its binding partners to promote depolymerization. The polypeptide is Septation ring formation regulator EzrA (Streptococcus sanguinis (strain SK36)).